Here is a 295-residue protein sequence, read N- to C-terminus: Small ribosomal subunit protein uS2 (295 aa).

N-acetylserine is present on serine 2. Serine 43 carries the phosphoserine modification. Position 52 is an N6-acetyllysine (lysine 52). Residues 54-113 (TWEKLLLAARAIVAIENPADVSVISSRNTGQRAVLKFAAATGATPIAGRFTPGTFTNQIQ) are interaction with PPP1R16B. Position 89 is an N6-acetyllysine; alternate (lysine 89). Lysine 89 is covalently cross-linked (Glycyl lysine isopeptide (Lys-Gly) (interchain with G-Cter in SUMO2); alternate). Threonine 97 carries the post-translational modification Phosphothreonine. 2 laminin-binding regions span residues 161–180 (IPCN…MLAR) and 205–229 (RDPE…EFQG). 5 [DE]-W-[ST] repeats span residues 230 to 232 (EWT), 247 to 249 (DWS), 266 to 268 (DWS), 275 to 277 (DWS), and 293 to 295 (EWS). The interval 242–295 (QPEVADWSEGVQVPSVPIQQFPTEDWSAQPATEDWSAAPTAQATEWVGATTEWS) is laminin-binding. A disordered region spans residues 266–295 (DWSAQPATEDWSAAPTAQATEWVGATTEWS).

This sequence belongs to the universal ribosomal protein uS2 family. As to quaternary structure, monomer (37LRP) and homodimer (67LR). Component of the small ribosomal subunit. Mature ribosomes consist of a small (40S) and a large (60S) subunit. The 40S subunit contains about 33 different proteins and 1 molecule of RNA (18S). The 60S subunit contains about 49 different proteins and 3 molecules of RNA (28S, 5.8S and 5S). Interacts with RPS21. Interacts with several laminins including at least LAMB1. Interacts with MDK. The mature dimeric form interacts with PPP1R16B (via its fourth ankyrin repeat). Interacts with PPP1CA only in the presence of PPP1R16B. In terms of processing, acylated. Acylation may be a prerequisite for conversion of the monomeric 37 kDa laminin receptor precursor (37LRP) to the mature dimeric 67 kDa laminin receptor (67LR), and may provide a mechanism for membrane association. Post-translationally, cleaved by stromelysin-3 (ST3) at the cell surface. Cleavage by stromelysin-3 may be a mechanism to alter cell-extracellular matrix interactions.

Its subcellular location is the cell membrane. The protein resides in the cytoplasm. The protein localises to the nucleus. In terms of biological role, required for the assembly and/or stability of the 40S ribosomal subunit. Required for the processing of the 20S rRNA-precursor to mature 18S rRNA in a late step of the maturation of 40S ribosomal subunits. Also functions as a cell surface receptor for laminin. Plays a role in cell adhesion to the basement membrane and in the consequent activation of signaling transduction pathways. May play a role in cell fate determination and tissue morphogenesis. Also acts as a receptor for several other ligands, including the pathogenic prion protein, viruses, and bacteria. Acts as a PPP1R16B-dependent substrate of PPP1CA. This chain is Small ribosomal subunit protein uS2, found in Chlorocebus aethiops (Green monkey).